Reading from the N-terminus, the 255-residue chain is Malonyl-[acyl-carrier protein] O-methyltransferase (255 aa).

Belongs to the methyltransferase superfamily.

It catalyses the reaction malonyl-[ACP] + S-adenosyl-L-methionine = malonyl-[ACP] methyl ester + S-adenosyl-L-homocysteine. Its pathway is cofactor biosynthesis; biotin biosynthesis. In terms of biological role, converts the free carboxyl group of a malonyl-thioester to its methyl ester by transfer of a methyl group from S-adenosyl-L-methionine (SAM). It allows to synthesize pimeloyl-ACP via the fatty acid synthetic pathway. This is Malonyl-[acyl-carrier protein] O-methyltransferase from Porphyromonas gingivalis (strain ATCC BAA-308 / W83).